We begin with the raw amino-acid sequence, 86 residues long: MVKLRLKRCGRKQRAIYRIVAIDVRSRREGRDLRKVGFYDPIKNQTYSNVPAILYFLEKGAQPTGTVHDISKKAEVFKELRINQTK.

It belongs to the bacterial ribosomal protein bS16 family.

The protein localises to the plastid. Its subcellular location is the chloroplast. This chain is Small ribosomal subunit protein bS16c, found in Liriodendron tulipifera (Tuliptree).